We begin with the raw amino-acid sequence, 406 residues long: Linalool 8-monooxygenase (406 aa).

Residue cysteine 355 participates in heme binding.

Belongs to the cytochrome P450 family. The cofactor is heme.

The enzyme catalyses linalool + 2 reduced [NADPH--hemoprotein reductase] + 2 O2 = (6E)-8-oxolinalool + 2 oxidized [NADPH--hemoprotein reductase] + 3 H2O + 2 H(+). The protein operates within terpene metabolism; linalool degradation. Catalyzes the 8-methyl hydroxylation of linalool. This is Linalool 8-monooxygenase (linC) from Pseudomonas putida (Arthrobacter siderocapsulatus).